A 419-amino-acid polypeptide reads, in one-letter code: D-galactonate dehydratase family member SEN1436 (419 aa).

Residues Gln45 and His129 each contribute to the substrate site. Catalysis depends on Tyr160, which acts as the Proton donor/acceptor. Asp225 contributes to the Mg(2+) binding site. His227 acts as the Proton donor/acceptor in catalysis. 2 residues coordinate Mg(2+): Glu251 and Glu277. Substrate is bound by residues Glu277, Arg298, His327, Asp331, and Glu354.

Belongs to the mandelate racemase/muconate lactonizing enzyme family. GalD subfamily. In terms of assembly, homotetramer. It depends on Mg(2+) as a cofactor.

It carries out the reaction D-gluconate = 2-dehydro-3-deoxy-D-gluconate + H2O. Functionally, has low D-gluconate dehydratase activity (in vitro), suggesting that it has no significant role in D-gluconate degradation in vivo. Has no detectable activity with a panel of 70 other acid sugars (in vitro). The protein is D-galactonate dehydratase family member SEN1436 of Salmonella enteritidis PT4 (strain P125109).